A 108-amino-acid chain; its full sequence is UPF0060 membrane protein YnfA (108 aa).

Topologically, residues 1-5 (MLKTT) are periplasmic. The chain crosses the membrane as a helical span at residues 6–26 (LLFFVTALCEIIGCFLTWLWI). At 27 to 30 (KRGA) the chain is on the cytoplasmic side. The chain crosses the membrane as a helical span at residues 31–51 (SVWWLLPAAASLALFVWLLTL). The Periplasmic portion of the chain corresponds to 52-60 (HPAASGRVY). A helical membrane pass occupies residues 61 to 81 (AAYGGVYVCTALLWLRVVDGV). Topologically, residues 82–84 (RLT) are cytoplasmic. A helical transmembrane segment spans residues 85–105 (VYDWCGAPIALCGMLIIVVGW). Over 106-108 (GRT) the chain is Periplasmic.

The protein belongs to the UPF0060 family.

It localises to the cell inner membrane. In Salmonella dublin (strain CT_02021853), this protein is UPF0060 membrane protein YnfA.